Consider the following 156-residue polypeptide: 6,7-dimethyl-8-ribityllumazine synthase (156 aa).

Residues phenylalanine 22, 57 to 59 (AYE), and 81 to 83 (TVI) each bind 5-amino-6-(D-ribitylamino)uracil. 86-87 (GT) provides a ligand contact to (2S)-2-hydroxy-3-oxobutyl phosphate. Histidine 89 functions as the Proton donor in the catalytic mechanism. Phenylalanine 114 contacts 5-amino-6-(D-ribitylamino)uracil. Arginine 128 lines the (2S)-2-hydroxy-3-oxobutyl phosphate pocket.

Belongs to the DMRL synthase family. Forms an icosahedral capsid composed of 60 subunits, arranged as a dodecamer of pentamers.

It catalyses the reaction (2S)-2-hydroxy-3-oxobutyl phosphate + 5-amino-6-(D-ribitylamino)uracil = 6,7-dimethyl-8-(1-D-ribityl)lumazine + phosphate + 2 H2O + H(+). It functions in the pathway cofactor biosynthesis; riboflavin biosynthesis; riboflavin from 2-hydroxy-3-oxobutyl phosphate and 5-amino-6-(D-ribitylamino)uracil: step 1/2. Catalyzes the formation of 6,7-dimethyl-8-ribityllumazine by condensation of 5-amino-6-(D-ribitylamino)uracil with 3,4-dihydroxy-2-butanone 4-phosphate. This is the penultimate step in the biosynthesis of riboflavin. This is 6,7-dimethyl-8-ribityllumazine synthase from Salmonella heidelberg (strain SL476).